The sequence spans 179 residues: Large ribosomal subunit protein uL6 (179 aa).

It belongs to the universal ribosomal protein uL6 family. As to quaternary structure, part of the 50S ribosomal subunit.

Its function is as follows. This protein binds to the 23S rRNA, and is important in its secondary structure. It is located near the subunit interface in the base of the L7/L12 stalk, and near the tRNA binding site of the peptidyltransferase center. This chain is Large ribosomal subunit protein uL6, found in Chlorobium luteolum (strain DSM 273 / BCRC 81028 / 2530) (Pelodictyon luteolum).